The sequence spans 393 residues: Golgi membrane protein 1 (393 aa).

Met1 carries the post-translational modification N-acetylmethionine. Residues 1-12 (MMGLGNGRRSMK) lie on the Cytoplasmic side of the membrane. A helical; Signal-anchor for type II membrane protein transmembrane segment spans residues 13–35 (SPPLILAALVACVIVLGFNYWIA). The Lumenal segment spans residues 36 to 393 (SSRSVELQTR…QVGIHIPQQA (358 aa)). Positions 40-183 (VELQTRIVEL…IEEVIRKRNE (144 aa)) form a coiled coil. Asn109 and Asn144 each carry an N-linked (GlcNAc...) asparagine glycan. 2 disordered regions span residues 180–247 (KRNE…QVQN) and 284–352 (HTQL…LAGN). Phosphoserine is present on Ser187. Composition is skewed to polar residues over residues 192-201 (ETNNQHQQAL) and 227-247 (NKSQIPAPNSESLGLKPQVQN). Asn227 carries N-linked (GlcNAc...) asparagine glycosylation. The segment covering 294–320 (RPEEDSQYPEREQLVIRDRQEQQRASE) has biased composition (basic and acidic residues). The segment covering 330 to 339 (DEYDMDENEA) has biased composition (acidic residues).

The protein belongs to the GOLM family. As to quaternary structure, interacts with DYM. In terms of processing, glycosylated. Post-translationally, phosphorylation sites are present in the extracellular medium.

The protein resides in the golgi apparatus. The protein localises to the cis-Golgi network membrane. In terms of biological role, unknown. Cellular response protein to viral infection. In Mus musculus (Mouse), this protein is Golgi membrane protein 1 (Golm1).